A 203-amino-acid chain; its full sequence is SPbeta prophage-derived uncharacterized protein YouA (203 aa).

The segment at 1–23 is disordered; that stretch reads MAFLNQDGDKYTSAKDDGTGNPI. A compositionally biased stretch (basic and acidic residues) spans 7 to 18; the sequence is DGDKYTSAKDDG.

The protein is SPbeta prophage-derived uncharacterized protein YouA (youA) of Bacillus subtilis (strain 168).